Here is a 641-residue protein sequence, read N- to C-terminus: Kelch-like protein 22 (641 aa).

A disordered region spans residues 1–25; sequence MAEDLETMKPSQAPQQPSLPQGSSK. Positions 10–24 are enriched in low complexity; it reads PSQAPQQPSLPQGSS. The 68-residue stretch at 50 to 117 folds into the BTB domain; the sequence is FDVVLKVEGK…IYTSDLALSV (68 aa). 6 Kelch repeats span residues 299–349, 350–399, 400–446, 448–493, 494–544, and 545–593; these read CVVG…VLNN, FVYL…VLGD, FLYA…ALDG, MYVA…ALQE, KIYL…VLAK, and KIFV…VLTL.

Component of the BCR(KLHL22) E3 ubiquitin ligase complex, at least composed of cul3, klhl22 and rbx1.

The protein localises to the cytoplasm. It is found in the cytosol. Its subcellular location is the cytoskeleton. It localises to the microtubule organizing center. The protein resides in the centrosome. The protein localises to the spindle. It is found in the nucleus. Its subcellular location is the lysosome. It functions in the pathway protein modification; protein ubiquitination. In terms of biological role, substrate-specific adapter of a BCR (BTB-CUL3-RBX1) E3 ubiquitin ligase complex. The BCR(KLHL22) ubiquitin ligase complex could mediate the monoubiquitination of PLK1 and regulate its activity in spindle assembly checkpoint (SAC) and chromosome segregation. The BCR(KLHL22) ubiquitin ligase complex may also be responsible for the ubiquitin-dependent proteasomal degradation of DEPDC5 and the activation of the TORC1 pathway. This Xenopus tropicalis (Western clawed frog) protein is Kelch-like protein 22 (klhl22).